Here is a 291-residue protein sequence, read N- to C-terminus: Pantothenate synthetase 1 (291 aa).

Catalysis depends on His37, which acts as the Proton donor. Position 147 to 150 (147 to 150) interacts with ATP; it reads GEKD. Gln153 lines the (R)-pantoate pocket. Residue 184 to 187 participates in ATP binding; it reads ISSR.

Belongs to the pantothenate synthetase family. Homodimer.

Its subcellular location is the cytoplasm. The catalysed reaction is (R)-pantoate + beta-alanine + ATP = (R)-pantothenate + AMP + diphosphate + H(+). It functions in the pathway cofactor biosynthesis; (R)-pantothenate biosynthesis; (R)-pantothenate from (R)-pantoate and beta-alanine: step 1/1. In terms of biological role, catalyzes the condensation of pantoate with beta-alanine in an ATP-dependent reaction via a pantoyl-adenylate intermediate. The polypeptide is Pantothenate synthetase 1 (Frankia alni (strain DSM 45986 / CECT 9034 / ACN14a)).